We begin with the raw amino-acid sequence, 590 residues long: Muscarinic acetylcholine receptor M3 (590 aa).

The Extracellular portion of the chain corresponds to 1-67; it reads MTLHSNSTTS…DPLGGHTVWQ (67 aa). Asn6, Asn15, Asn41, and Asn48 each carry an N-linked (GlcNAc...) asparagine glycan. A helical membrane pass occupies residues 68–91; sequence VVFIAFLTGILALVTIIGNILVIV. Residues 92 to 104 are Cytoplasmic-facing; the sequence is SFKVNKQLKTVNN. Residues 105–130 form a helical membrane-spanning segment; sequence YFLLSLACADLIIGVISMNLFTTYII. Residues 131–142 lie on the Extracellular side of the membrane; it reads MNRWALGNLACD. A disulfide bridge connects residues Cys141 and Cys221. The chain crosses the membrane as a helical span at residues 143 to 164; sequence LWLAIDYVASNASVMNLLVISF. Residues 165–184 lie on the Cytoplasmic side of the membrane; the sequence is DRYFSITRPLTYRAKRTTKR. A helical membrane pass occupies residues 185 to 206; it reads AGVMIGLAWVISFVLWAPAILF. Residues 207 to 229 are Extracellular-facing; the sequence is WQYFVGKRTVPPGECFIQFLSEP. Residues 230–252 traverse the membrane as a helical segment; sequence TITFGTAIAAFYMPVTIMTILYW. Topologically, residues 253–491 are cytoplasmic; it reads RIYKETEKRT…SLVKEKKAAQ (239 aa). The short motif at 275–281 is the Basolateral sorting signal element; that stretch reads AETENFV. Residues 323–357 form a disordered region; that stretch reads SSEQMDQDHSSSDSWNNNDAAASLENSASSDEEDI. The span at 334–345 shows a compositional bias: low complexity; the sequence is SDSWNNNDAAAS. Ser385 carries the phosphoserine modification. The chain crosses the membrane as a helical span at residues 492–514; it reads TLSAILLAFIITWTPYNIMVLVN. Residues 515 to 526 lie on the Extracellular side of the membrane; sequence TFCDSCIPKTFW. An intrachain disulfide couples Cys517 to Cys520. Residues 527-546 form a helical membrane-spanning segment; the sequence is NLGYWLCYINSTVNPVCYAL. The Cytoplasmic segment spans residues 547–590; the sequence is CNKTFRTTFKMLLLCQCDKKKRRKQQYQQRQSVIFHKRAPEQAL.

This sequence belongs to the G-protein coupled receptor 1 family. Muscarinic acetylcholine receptor subfamily. CHRM3 sub-subfamily. As to quaternary structure, homodimer; the dimers can form tetramers. Interacts with NALCN. Interacts with TMEM147.

The protein localises to the cell membrane. It is found in the postsynaptic cell membrane. It localises to the basolateral cell membrane. The protein resides in the endoplasmic reticulum membrane. The muscarinic acetylcholine receptor mediates various cellular responses, including inhibition of adenylate cyclase, breakdown of phosphoinositides and modulation of potassium channels through the action of G proteins. Primary transducing effect is Pi turnover. The chain is Muscarinic acetylcholine receptor M3 (CHRM3) from Pongo pygmaeus (Bornean orangutan).